The primary structure comprises 74 residues: Mu-conotoxin-like T3.1 (74 aa).

The first 19 residues, 1–19 (MSKLGVLLTICLLLFPLTA), serve as a signal peptide directing secretion. The propeptide occupies 20–74 (LPMDGDEPADRPAERMQDNISSEQHPLFEERHGCCKGPEGCSSRECRPQHCCGRR). Disulfide bonds link Cys-53/Cys-65, Cys-54/Cys-70, and Cys-60/Cys-71. Pro-57 bears the 4-hydroxyproline mark. 4-carboxyglutamate occurs at positions 58 and 64. The residue at position 67 (Pro-67) is a 4-hydroxyproline. Cys-71 is modified (cysteine amide).

It belongs to the conotoxin M superfamily. Expressed by the venom duct.

It localises to the secreted. Its function is as follows. Mu-conotoxins block voltage-gated sodium channels (Nav). In vitro, this synthetic peptide displays a low blocking effect in mouse extensor digitorum longus muscles (IC(50)=616 nM). This is Mu-conotoxin-like T3.1 from Conus tulipa (Fish-hunting cone snail).